Reading from the N-terminus, the 669-residue chain is Zinc finger CCCH domain-containing protein 17 (669 aa).

Residues 1–11 are compositionally biased toward low complexity; sequence MFAPATQPQQQ. The tract at residues 1 to 23 is disordered; it reads MFAPATQPQQQHEQKKQSETVSS. 3 C3H1-type zinc fingers span residues 34–58, 60–86, and 114–141; these read DCVY…HSEY, RMNP…HPPL, and AKQP…HTPN. Disordered regions lie at residues 150 to 175, 285 to 306, 376 to 589, and 642 to 669; these read PVEA…EKKL, VEDR…PDFS, GMRL…VMEE, and EEGE…EMLS. Basic and acidic residues-rich tracts occupy residues 164–175, 285–299, 392–406, 420–464, 478–499, and 547–579; these read KPIENNTEEKKL, VEDR…RGNS, SMDR…DTPR, KLRE…EENH, RRRE…ESKP, and NNKD…PKAE. Acidic residues-rich tracts occupy residues 580–589 and 642–659; these read VEEEGTVMEE and EEGE…GEED. The span at 660–669 shows a compositional bias: basic and acidic residues; it reads IEKKTVEMLS.

This chain is Zinc finger CCCH domain-containing protein 17, found in Arabidopsis thaliana (Mouse-ear cress).